The following is a 714-amino-acid chain: BRCA1-associated RING domain protein 1 (714 aa).

The RING-type zinc finger occupies 25–63 (CPLCLKLLNRPVLLPCDHVFCDSCVHKSSQVESGCPVCK). Disordered regions lie at residues 106–165 (YKND…QDWT) and 254–283 (KAQN…DAME). Residues 118–134 (KHGESEDSEMTDKDVSK) show a composition bias toward basic and acidic residues. Positions 135–147 (RSGGTDSSSRDGS) are enriched in low complexity. Composition is skewed to basic and acidic residues over residues 155–165 (SDPRPKHQDWT) and 264–283 (SHTE…DAME). The segment at 331 to 382 (ITICGFCQSARVSEATGEMLHYSRGRPVDGDDIFRSNVIHVHSACIEWAPQV) adopts a C2HC pre-PHD-type zinc-finger fold. A PHD-type zinc finger spans residues 402-451 (IKCTKCSLKGAALGCFVKSCRRSYHVPCAREISRCRWDYEDFLLLCPAHS). BRCT domains are found at residues 482-577 (EQTP…PFEI) and 598-713 (NKPK…HPVI).

As to quaternary structure, component of a DNA-protein complex on WUS and WOX5 promoters. Interacts with SYD. Forms heterodimer with BRCA1. In terms of tissue distribution, expressed in the shoot apical meristem (SAM), roots, flowers, embryos and seedlings. Mostly expressed in flowers and siliques, and, to a lower extent, in roots, rosette leaves, inflorescence and young cauline leaves.

It is found in the nucleus. Functionally, binds specifically to H3K4me3 regions of target genes (e.g. WUS and WOX5) promoters to repress their transcription via chromatin remodeling. Required for the shoot apical meristem (SAM) organization and maintenance, by confining WUS expression to the organizing center, and for the quiescent center (QC) development in the root apical meristem (RAM), by repressing WOX5 expression in the root proximal meristem. Plays a role in DNA repair and in cell-cycle control. Required for the repair of DNA double-strand breaks (DSBs), both natural and induced by genotoxic stress, by homologous recombination (HR). This is BRCA1-associated RING domain protein 1 from Arabidopsis thaliana (Mouse-ear cress).